A 418-amino-acid polypeptide reads, in one-letter code: Dwarfin sma-2 (418 aa).

An MH1 domain is found at 8–134; the sequence is KKITERLKWK…YKRVHATGVL (127 aa). The Zn(2+) site is built by cysteine 62, cysteine 107, cysteine 119, and histidine 124. Positions 222-418 constitute an MH2 domain; the sequence is WATVSYYELN…PTPRPISSIS (197 aa).

This sequence belongs to the dwarfin/SMAD family.

The protein localises to the cytoplasm. Its subcellular location is the nucleus. Its function is as follows. Involved in TGF-beta pathway. Plays a role in male tail tip morphogenesis. In Caenorhabditis elegans, this protein is Dwarfin sma-2.